The following is a 191-amino-acid chain: Calcium-activated potassium channel subunit beta-1 (191 aa).

Over 1-15 (MGKKLVMAQKRGETR) the chain is Cytoplasmic. A helical transmembrane segment spans residues 16 to 36 (ALCLGVAMVMCAVIAYYILGT). The Extracellular segment spans residues 37–157 (TMLPLYQKSV…YRRLYGPQTL (121 aa)). N-linked (GlcNAc...) asparagine glycosylation is found at Asn80 and Asn142. The helical transmembrane segment at 158–178 (LFSLFWPTFLLTGGLLIIAMV) threads the bilayer. Residues 179-191 (KINQSLSILAAQR) lie on the Cytoplasmic side of the membrane.

It belongs to the KCNMB (TC 8.A.14.1) family. KCNMB1 subfamily. In terms of assembly, interacts with KCNMA1 tetramer. There are probably 4 molecules of KCMNB1 per KCNMA1 tetramer. In terms of processing, N-glycosylated.

It is found in the membrane. Its function is as follows. Regulatory subunit of the calcium activated potassium KCNMA1 (maxiK) channel. Modulates the calcium sensitivity and gating kinetics of KCNMA1, thereby contributing to KCNMA1 channel diversity. Increases the apparent Ca(2+)/voltage sensitivity of the KCNMA1 channel. It also modifies KCNMA1 channel kinetics and alters its pharmacological properties. It slows down the activation and the deactivation kinetics of the channel. Acts as a negative regulator of smooth muscle contraction by enhancing the calcium sensitivity to KCNMA1. Its presence is also a requirement for internal binding of the KCNMA1 channel opener dehydrosoyasaponin I (DHS-1) triterpene glycoside and for external binding of the agonist hormone 17-beta-estradiol (E2). Increases the binding activity of charybdotoxin (CTX) toxin to KCNMA1 peptide blocker by increasing the CTX association rate and decreasing the dissociation rate. This chain is Calcium-activated potassium channel subunit beta-1 (KCNMB1), found in Canis lupus familiaris (Dog).